The primary structure comprises 345 residues: Cytoskeleton protein RodZ (345 aa).

The Cytoplasmic segment spans residues 1 to 111 (MNTEASQDQT…LGKKHKKRDG (111 aa)). Residues 19-79 (LRQARESLGL…KLVHLPEDEL (61 aa)) enclose the HTH cro/C1-type domain. The H-T-H motif DNA-binding region spans 30–49 (QQTVAERLCLKVSTIRDIEE). The helical; Signal-anchor for type II membrane protein transmembrane segment at 112-132 (WLMSFTWLIVLVVLGLTGAWW) threads the bilayer. The Periplasmic portion of the chain corresponds to 133–345 (WQNHQAQQAE…RVARLTVCVE (213 aa)). The interval 151–259 (SAQLSQNGGQ…PLPTADAGVS (109 aa)) is disordered. Positions 188–225 (PLTNHSGSAITNSATTSSVPKTTSTEPVDTANTNTTMH) are enriched in polar residues. The span at 229–241 (AASAAVSPSQVPQ) shows a compositional bias: low complexity.

This sequence belongs to the RodZ family.

The protein localises to the cell inner membrane. Its function is as follows. Cytoskeletal protein that is involved in cell-shape control through regulation of the length of the long axis. The sequence is that of Cytoskeleton protein RodZ from Yersinia pestis bv. Antiqua (strain Antiqua).